Here is a 304-residue protein sequence, read N- to C-terminus: Pyridoxal 5'-phosphate synthase subunit PdxS (304 aa).

D-ribose 5-phosphate is bound at residue D34. K91 acts as the Schiff-base intermediate with D-ribose 5-phosphate in catalysis. Position 163 (G163) interacts with D-ribose 5-phosphate. R175 serves as a coordination point for D-glyceraldehyde 3-phosphate. Residues G224 and 245–246 (GS) contribute to the D-ribose 5-phosphate site.

The protein belongs to the PdxS/SNZ family. In the presence of PdxT, forms a dodecamer of heterodimers.

It carries out the reaction aldehydo-D-ribose 5-phosphate + D-glyceraldehyde 3-phosphate + L-glutamine = pyridoxal 5'-phosphate + L-glutamate + phosphate + 3 H2O + H(+). It participates in cofactor biosynthesis; pyridoxal 5'-phosphate biosynthesis. Its function is as follows. Catalyzes the formation of pyridoxal 5'-phosphate from ribose 5-phosphate (RBP), glyceraldehyde 3-phosphate (G3P) and ammonia. The ammonia is provided by the PdxT subunit. Can also use ribulose 5-phosphate and dihydroxyacetone phosphate as substrates, resulting from enzyme-catalyzed isomerization of RBP and G3P, respectively. The sequence is that of Pyridoxal 5'-phosphate synthase subunit PdxS from Cutibacterium acnes (strain DSM 16379 / KPA171202) (Propionibacterium acnes).